Reading from the N-terminus, the 231-residue chain is Large ribosomal subunit protein uL1 (231 aa).

Belongs to the universal ribosomal protein uL1 family. In terms of assembly, part of the 50S ribosomal subunit.

In terms of biological role, binds directly to 23S rRNA. The L1 stalk is quite mobile in the ribosome, and is involved in E site tRNA release. Functionally, protein L1 is also a translational repressor protein, it controls the translation of the L11 operon by binding to its mRNA. The polypeptide is Large ribosomal subunit protein uL1 (Acinetobacter baumannii (strain AB307-0294)).